The primary structure comprises 561 residues: Arginine--tRNA ligase (561 aa).

The 'HIGH' region motif lies at 128 to 138; it reads ANPTGPLHVGH.

The protein belongs to the class-I aminoacyl-tRNA synthetase family. As to quaternary structure, monomer.

It is found in the cytoplasm. The catalysed reaction is tRNA(Arg) + L-arginine + ATP = L-arginyl-tRNA(Arg) + AMP + diphosphate. The polypeptide is Arginine--tRNA ligase (Leptothrix cholodnii (strain ATCC 51168 / LMG 8142 / SP-6) (Leptothrix discophora (strain SP-6))).